Here is an 817-residue protein sequence, read N- to C-terminus: MSFKKSLKMGENLASESDLLSMISEYLKFGEFEETARTFEKEVKRKGKPALKSAGASRRDSKIISIYEDFLSSFNDGDYKVFSELWAKNIPPEIRDFDPVAQKLEFYLQIHFTIYPLKSPLGSHDKAEFDSRITHFRHYLETRGAALSQTTEFLPFYALPFVPNPMVHPSFQELFQDSWMPDLRDRMEKFLTVTLKASNTPRLLALYNDAGKGNKEAIQQMQLQLTEAERKSAVHIRRFAKLQADHHNLIGVTAELVDSLEATVRGKMISPEYLQGVCVRLFSGNMRQSAAQSLDFTRPGTASSMLRASVAPQRPKDVPLLPSLDYEKLKKDLLTGSDRLKALLLQALRWRLTRSLHGEQRDTVLQAFISNDLLERYSNKQKTVLHLIKCKNEIVRQYTARLINAFASLCDGRLYLSQIPALLPFLLDCLKTEEKESVTRENVLAALQKLSLRRAQQSAMIRDGLIGWLVKELNDSDCLSDYTLEYAISLLMNLCLRTQGKKRCAEEAKYVLKVLTELLGHENHEIRYYVNGALYSILSVPEIREEAKQMSMEEILRCYNKEENPELNRQIEFIIKQLNSATIPEQEPESDDEEDEDDDDDEEDVMEADLDKEEVLQPQPKELSGESLLTTEYLGIMTNMMKTKRRSCPPSSRSIDEPLQRPVTPSSHKNTIAGGEGVYPVTRQRSEDSRFSSRPATRTGSRPSTAESIHQTLATDSDCWRSSVESGLMGSPERHVPAPGQTTNSVQSYSGHMVGFASRPKIPRTPDSDAGSAGRSRLPPLAPQFSNSEPQQSGSRPGSAGGSSGRPSQQSSQSNRK.

The LisH domain maps to 15–47 (SESDLLSMISEYLKFGEFEETARTFEKEVKRKG). 3 disordered regions span residues 580–605 (SATI…EEDV), 610–629 (LDKE…ESLL), and 642–817 (KTKR…SNRK). Acidic residues predominate over residues 586–605 (QEPESDDEEDEDDDDDEEDV). Polar residues-rich tracts occupy residues 692-715 (SSRP…TLAT) and 740-750 (GQTTNSVQSYS). Over residues 805 to 817 (GRPSQQSSQSNRK) the composition is skewed to low complexity.

In terms of tissue distribution, expressed in multiple CNS regions, including the cerebellum, all periventricular regions, and all layers of the retina.

The protein localises to the cytoplasm. It localises to the cytoskeleton. The protein resides in the cilium basal body. Its subcellular location is the cell projection. It is found in the cilium. The protein localises to the microtubule organizing center. It localises to the centrosome. The protein resides in the centriole. Its function is as follows. Involved in ciliogenesis. It is required for appropriate acetylation and polyglutamylation of ciliary microtubules, and regulation of cilium length. Acts as a positive regulator of hedgehog (Hh) signaling. The sequence is that of LisH domain-containing protein ARMC9 (armc9) from Danio rerio (Zebrafish).